The sequence spans 355 residues: tRNA pseudouridine synthase D (355 aa).

D84 serves as the catalytic Nucleophile. The 147-residue stretch at 160-306 (GVPNYFGLQR…MAHERRILRL (147 aa)) folds into the TRUD domain.

The protein belongs to the pseudouridine synthase TruD family.

The catalysed reaction is uridine(13) in tRNA = pseudouridine(13) in tRNA. Its function is as follows. Responsible for synthesis of pseudouridine from uracil-13 in transfer RNAs. The sequence is that of tRNA pseudouridine synthase D from Pseudomonas aeruginosa (strain UCBPP-PA14).